The following is a 251-amino-acid chain: Phosphoribosylaminoimidazole-succinocarboxamide synthase (251 aa).

This sequence belongs to the SAICAR synthetase family.

The catalysed reaction is 5-amino-1-(5-phospho-D-ribosyl)imidazole-4-carboxylate + L-aspartate + ATP = (2S)-2-[5-amino-1-(5-phospho-beta-D-ribosyl)imidazole-4-carboxamido]succinate + ADP + phosphate + 2 H(+). The protein operates within purine metabolism; IMP biosynthesis via de novo pathway; 5-amino-1-(5-phospho-D-ribosyl)imidazole-4-carboxamide from 5-amino-1-(5-phospho-D-ribosyl)imidazole-4-carboxylate: step 1/2. This chain is Phosphoribosylaminoimidazole-succinocarboxamide synthase, found in Phenylobacterium zucineum (strain HLK1).